The chain runs to 342 residues: tRNA-dihydrouridine(20/20a) synthase (342 aa).

FMN is bound by residues 10–12 and Gln63; that span reads PMV. The active-site Proton donor is the Cys93. FMN is bound by residues Lys132, His164, 203–205, and 225–226; these read NGG and GR. The segment covering 313-331 has biased composition (basic and acidic residues); the sequence is EEEVGEEGEKEKPGPRGQR. The tract at residues 313–342 is disordered; sequence EEEVGEEGEKEKPGPRGQREAAPGPAREGV.

The protein belongs to the Dus family. DusA subfamily. Requires FMN as cofactor.

It carries out the reaction 5,6-dihydrouridine(20) in tRNA + NADP(+) = uridine(20) in tRNA + NADPH + H(+). The catalysed reaction is 5,6-dihydrouridine(20) in tRNA + NAD(+) = uridine(20) in tRNA + NADH + H(+). It catalyses the reaction 5,6-dihydrouridine(20a) in tRNA + NADP(+) = uridine(20a) in tRNA + NADPH + H(+). The enzyme catalyses 5,6-dihydrouridine(20a) in tRNA + NAD(+) = uridine(20a) in tRNA + NADH + H(+). Functionally, catalyzes the synthesis of 5,6-dihydrouridine (D), a modified base found in the D-loop of most tRNAs, via the reduction of the C5-C6 double bond in target uridines. Specifically modifies U20 and U20a in tRNAs. This chain is tRNA-dihydrouridine(20/20a) synthase (dus), found in Thermus thermophilus (strain ATCC 27634 / DSM 579 / HB8).